We begin with the raw amino-acid sequence, 271 residues long: Mannosyl-3-phosphoglycerate phosphatase (271 aa).

Asp13 acts as the Nucleophile in catalysis. 3 residues coordinate Mg(2+): Asp13, Asp15, and Asp214.

This sequence belongs to the HAD-like hydrolase superfamily. MPGP family. Requires Mg(2+) as cofactor.

It is found in the cytoplasm. The catalysed reaction is 2-O-(alpha-D-mannosyl)-3-phosphoglycerate + H2O = (2R)-2-O-(alpha-D-mannosyl)-glycerate + phosphate. The polypeptide is Mannosyl-3-phosphoglycerate phosphatase (yedP) (Escherichia coli O6:H1 (strain CFT073 / ATCC 700928 / UPEC)).